The following is an 89-amino-acid chain: Cell division protein ZapA (89 aa).

The protein belongs to the ZapA family. Type 2 subfamily. Homodimer. Interacts with FtsZ.

It is found in the cytoplasm. Functionally, activator of cell division through the inhibition of FtsZ GTPase activity, therefore promoting FtsZ assembly into bundles of protofilaments necessary for the formation of the division Z ring. It is recruited early at mid-cell but it is not essential for cell division. The polypeptide is Cell division protein ZapA (Bacillus mycoides (strain KBAB4) (Bacillus weihenstephanensis)).